We begin with the raw amino-acid sequence, 273 residues long: Rho GTPase-activating protein gacB (273 aa).

A Rho-GAP domain is found at 1–192; that stretch reads MTDQTLRLEN…YLISHFNEIF (192 aa).

It is found in the cytoplasm. Rho GTPase-activating protein involved in the signal transduction pathway. In Dictyostelium discoideum (Social amoeba), this protein is Rho GTPase-activating protein gacB (gacB).